An 846-amino-acid chain; its full sequence is Integrin beta-PS (846 aa).

An N-terminal signal peptide occupies residues 1–28 (MILERNRRCQLALLMIAILAAIAGQTDA). The Extracellular portion of the chain corresponds to 29–777 (QKAAKLTAVS…NKECPAKVFM (749 aa)). A disulfide bond links Cys46 and Cys55. A glycan (N-linked (GlcNAc...) asparagine) is linked at Asn72. One can recognise a VWFA domain in the interval 186-419 (DLYYLMDLSK…ELVKEEYRKI (234 aa)). Cys249 and Cys252 are oxidised to a cystine. 2 N-linked (GlcNAc...) asparagine glycosylation sites follow: Asn266 and Asn277. The cysteines at positions 300 and 341 are disulfide-linked. Residues Asn403 and Asn428 are each glycosylated (N-linked (GlcNAc...) asparagine). 21 disulfides stabilise this stretch: Cys441/Cys453, Cys473/Cys741, Cys507/Cys530, Cys522/Cys533, Cys535/Cys544, Cys546/Cys579, Cys561/Cys577, Cys571/Cys582, Cys584/Cys599, Cys601/Cys624, Cys606/Cys622, Cys614/Cys627, Cys629/Cys638, Cys640/Cys664, Cys647/Cys662, Cys656/Cys667, Cys669/Cys682, Cys685/Cys688, Cys692/Cys701, Cys698/Cys771, and Cys719/Cys749. 4 I-EGF domains span residues 507 to 545 (CENP…NKCE), 546 to 600 (CSAT…KHCE), 601 to 639 (CDNF…SNCG), and 640 to 683 (CQES…RHCE). Asn557 is a glycosylation site (N-linked (GlcNAc...) asparagine). An N-linked (GlcNAc...) asparagine glycan is attached at Asn603. Asn644 is a glycosylation site (N-linked (GlcNAc...) asparagine). Asn718 carries an N-linked (GlcNAc...) asparagine glycan. A helical membrane pass occupies residues 778 to 798 (LGIVMGVIAAIVLVGLAILLL). Over 799–846 (WKLLTTIHDRREFARFEKERMNAKWDTGENPIYKQATSTFKNPMYAGK) the chain is Cytoplasmic. A phosphotyrosine mark is found at Tyr831 and Tyr843.

This sequence belongs to the integrin beta chain family. As to quaternary structure, heterodimer of an alpha and a beta subunit. Beta-PS associates with either alpha-PS1, alpha-PS2, alpha-PS3, alpha-PS4 or alpha-PS5. In terms of tissue distribution, in ovaries, strongly expressed in follicle cells. In oocytes, expressed in the forming dorsal appendages (at protein level). Expressed in the embryonic dorsal cuticle, the larval eye and the wing imaginal disk. In testes, detected at the interface between somatic hub cells and cyst stem cells.

Its subcellular location is the cell membrane. It is found in the apical cell membrane. It localises to the lateral cell membrane. The protein localises to the basal cell membrane. Integrin alpha-PS1/beta-PS is a receptor for laminin. Integrin alpha-PS2/beta-PS is a receptor for Tig, wb and Ten-m. Contributes to endodermal integrity and adhesion between the midgut epithelium and the surrounding visceral muscle. Essential for migration of the primordial midgut cells and for maintaining, but not establishing, cell polarity in the midgut epithelium. The two beta subunits mediate midgut migration by distinct mechanisms: beta-PS requires rhea/talin and Itgbn does not. Required for rhea/talin correct cellular localization in the midgut. Required for many embryonic (dorsal closure and somatic muscle attachments) and postembryonic developmental processes (attachment between cell layers of imaginal disks, organization of ommatidial arrays and flight muscle development). Involved in the function and/or development of the olfactory system. In the testes, essential for shv-dependent maintenance of somatic hub cells and their localization to the apical tip. Plays a role in timely border cell migration during oogenesis. The chain is Integrin beta-PS (mys) from Drosophila melanogaster (Fruit fly).